The sequence spans 238 residues: Phosphoribosylaminoimidazole-succinocarboxamide synthase (238 aa).

This sequence belongs to the SAICAR synthetase family.

The catalysed reaction is 5-amino-1-(5-phospho-D-ribosyl)imidazole-4-carboxylate + L-aspartate + ATP = (2S)-2-[5-amino-1-(5-phospho-beta-D-ribosyl)imidazole-4-carboxamido]succinate + ADP + phosphate + 2 H(+). The protein operates within purine metabolism; IMP biosynthesis via de novo pathway; 5-amino-1-(5-phospho-D-ribosyl)imidazole-4-carboxamide from 5-amino-1-(5-phospho-D-ribosyl)imidazole-4-carboxylate: step 1/2. The sequence is that of Phosphoribosylaminoimidazole-succinocarboxamide synthase from Desulfitobacterium hafniense (strain Y51).